Consider the following 563-residue polypeptide: MVKVSSSTTSSSSSSSPDEESDLQNLLEESDSQIDQFRISDEAAEQRPTFDVESLRSRLRRSFKLNLTKKQSIFIFLPIVIILIYLSTDFSNYFSVKVPNSAFRSNTLTGRVHESDLQALYLLRKQESDLFSIWNHTVSNLSTIDDVKSAVFRQISLNRQIQNALLSPHKTGNVDIGGSSDGYFAGGSCRKVDQKLNGRKTIQWKPRPDKFLFAICLSGQMSNHLICLEKHMFFAALLKRVLVIPSHRFDYHYSRIIDIDRINTCLGRTVVVSFEEFWKKDKNRKKHHHVHINRFICYFSKPEPCYVDKEHITKLKALGITVGGKLDTPWEEDIARPSNKTAEEVEANFRSDDDVIAIGDVFYANVEREWVMQPGGPVAHKCRTLIEPNRLILLTAQRFIQTFLGKNYIALHFRRHGFLKFCNAKNPSCFFPIPQAASCITRLIEKVEAPVLYLSTDAAESETGLLQSLLILNGKTVPLVKRPARDSAEKWDALLYRHGLEGDSQVEAMLDKTICALSSVFIGASGSTFTEDILRLRKDWGTASECDEYLCANEQPNFIADHE.

The span at 1–16 shows a compositional bias: low complexity; sequence MVKVSSSTTSSSSSSS. The interval 1-25 is disordered; it reads MVKVSSSTTSSSSSSSPDEESDLQN. Residues 73 to 93 traverse the membrane as a helical; Signal-anchor for type II membrane protein segment; the sequence is IFIFLPIVIILIYLSTDFSNY. N-linked (GlcNAc...) asparagine glycans are attached at residues N135, N140, and N339. Substrate contacts are provided by residues 412 to 414 and 528 to 529; these read HFR and TF.

This sequence belongs to the glycosyltransferase GT106 family.

The protein localises to the membrane. The protein operates within glycan metabolism. This is O-fucosyltransferase 14 from Arabidopsis thaliana (Mouse-ear cress).